The following is a 948-amino-acid chain: FRIGIDA-like protein 5 (948 aa).

The stretch at 47–164 (DSTRSVLEER…VEKHRERIVA (118 aa)) forms a coiled coil. 3 disordered regions span residues 447–500 (ESAQ…APSQ), 518–538 (VKESGADHQPDTIATHPSGTE), and 804–894 (RNTS…YPSH). Composition is skewed to basic and acidic residues over residues 459 to 475 (SYEKRQSTTKGVEKSEA) and 518 to 527 (VKESGADHQP). Residues 807–817 (SNGSGSGSASS) are compositionally biased toward low complexity. Polar residues predominate over residues 818–830 (KPDSTIKQSQTAK). Over residues 861–872 (FSKKNKRGKKRS) the composition is skewed to basic residues. Positions 873 to 894 (MSGNNQSSGHIASHTSNHYPSH) are enriched in polar residues.

This sequence belongs to the Frigida family. As to expression, expressed at low levels during seed development.

This is FRIGIDA-like protein 5 (FRL5) from Arabidopsis thaliana (Mouse-ear cress).